We begin with the raw amino-acid sequence, 397 residues long: Probable sugar efflux transporter (397 aa).

12 helical membrane passes run 15 to 35, 50 to 70, 81 to 101, 103 to 123, 136 to 156, 169 to 189, 209 to 229, 246 to 266, 275 to 295, 301 to 321, 333 to 353, and 364 to 384; these read VVTL…PVGL, VGIM…PFML, LICL…AWNF, VLVI…SITA, AQAL…GLPI, TFFA…KLLP, PALM…YTAY, FATV…VVFG, PLIS…LPAA, LAVL…GMQV, VAMA…ALVG, and TIGY…IIIF.

The protein belongs to the major facilitator superfamily. SotB (TC 2.A.1.2) family.

Its subcellular location is the cell inner membrane. Involved in the efflux of sugars. The physiological role may be the reduction of the intracellular concentration of toxic sugars or sugar metabolites. In Citrobacter koseri (strain ATCC BAA-895 / CDC 4225-83 / SGSC4696), this protein is Probable sugar efflux transporter.